The primary structure comprises 86 residues: RNA-binding protein Hfq (86 aa).

Positions 9–68 (DPYLNTLRKEKVPVSIYLVNGIKLQGSIESFDQFVVLLKNTVSQMVYKHAISTVVPARPV) constitute a Sm domain. A disordered region spans residues 67–86 (PVRLPSPTDGEHGDSEPGNA). A compositionally biased stretch (basic and acidic residues) spans 75–86 (DGEHGDSEPGNA).

Belongs to the Hfq family. As to quaternary structure, homohexamer.

In terms of biological role, RNA chaperone that binds small regulatory RNA (sRNAs) and mRNAs to facilitate mRNA translational regulation in response to envelope stress, environmental stress and changes in metabolite concentrations. Also binds with high specificity to tRNAs. The sequence is that of RNA-binding protein Hfq from Pseudomonas putida (strain GB-1).